Reading from the N-terminus, the 340-residue chain is tRNA N6-adenosine threonylcarbamoyltransferase (340 aa).

2 residues coordinate Fe cation: His111 and His115. Substrate-binding positions include 133–137, Asp166, Gly179, Asp183, and Asn272; that span reads VVSGG. Asp300 serves as a coordination point for Fe cation.

It belongs to the KAE1 / TsaD family. It depends on Fe(2+) as a cofactor.

The protein resides in the cytoplasm. It catalyses the reaction L-threonylcarbamoyladenylate + adenosine(37) in tRNA = N(6)-L-threonylcarbamoyladenosine(37) in tRNA + AMP + H(+). Required for the formation of a threonylcarbamoyl group on adenosine at position 37 (t(6)A37) in tRNAs that read codons beginning with adenine. Is involved in the transfer of the threonylcarbamoyl moiety of threonylcarbamoyl-AMP (TC-AMP) to the N6 group of A37, together with TsaE and TsaB. TsaD likely plays a direct catalytic role in this reaction. The chain is tRNA N6-adenosine threonylcarbamoyltransferase from Geobacter sulfurreducens (strain ATCC 51573 / DSM 12127 / PCA).